Consider the following 324-residue polypeptide: Glycerol-3-phosphate dehydrogenase [NAD(P)+] (324 aa).

Ser10, Phe11, Arg31, and Lys106 together coordinate NADPH. Sn-glycerol 3-phosphate-binding residues include Lys106, Gly134, and Ser136. Position 138 (Ala138) interacts with NADPH. The sn-glycerol 3-phosphate site is built by Lys189, Asp244, Ser254, Arg255, and Asn256. The active-site Proton acceptor is Lys189. Arg255 contributes to the NADPH binding site. Residues Ile279 and Glu281 each coordinate NADPH.

This sequence belongs to the NAD-dependent glycerol-3-phosphate dehydrogenase family.

The protein localises to the cytoplasm. It catalyses the reaction sn-glycerol 3-phosphate + NAD(+) = dihydroxyacetone phosphate + NADH + H(+). The enzyme catalyses sn-glycerol 3-phosphate + NADP(+) = dihydroxyacetone phosphate + NADPH + H(+). It functions in the pathway membrane lipid metabolism; glycerophospholipid metabolism. Catalyzes the reduction of the glycolytic intermediate dihydroxyacetone phosphate (DHAP) to sn-glycerol 3-phosphate (G3P), the key precursor for phospholipid synthesis. The chain is Glycerol-3-phosphate dehydrogenase [NAD(P)+] from Ehrlichia canis (strain Jake).